Here is a 209-residue protein sequence, read N- to C-terminus: Large ribosomal subunit protein bL25 (209 aa).

A disordered region spans residues 183–209 (TAGERPAAEPAAAPGAAPAAGPEEAEE). The segment covering 184-209 (AGERPAAEPAAAPGAAPAAGPEEAEE) has biased composition (low complexity).

The protein belongs to the bacterial ribosomal protein bL25 family. CTC subfamily. Part of the 50S ribosomal subunit; part of the 5S rRNA/L5/L18/L25 subcomplex. Contacts the 5S rRNA. Binds to the 5S rRNA independently of L5 and L18.

Its function is as follows. This is one of the proteins that binds to the 5S RNA in the ribosome where it forms part of the central protuberance. The protein is Large ribosomal subunit protein bL25 of Pelotomaculum thermopropionicum (strain DSM 13744 / JCM 10971 / SI).